Here is a 433-residue protein sequence, read N- to C-terminus: Coiled-coil domain-containing protein 71 (433 aa).

Ser-125 is modified (phosphoserine). 3 disordered regions span residues 204 to 256 (LKVR…GCSA), 284 to 310 (QTKT…KAAV), and 325 to 396 (KAAQ…RKSQ). Basic residues-rich tracts occupy residues 216-230 (KAPR…KHLT) and 288-306 (VRVR…RAKA). Residues 260 to 330 (KTVQAQASQT…QAKAKAAQTK (71 aa)) are a coiled coil.

The polypeptide is Coiled-coil domain-containing protein 71 (Ccdc71) (Mus musculus (Mouse)).